We begin with the raw amino-acid sequence, 50 residues long: Peptide encoded by miPEP319a (50 aa).

Its function is as follows. Regulatory peptide encoded by the primary transcript (pri-miR319a) of the microRNA miR319a that enhances the accumulation of its corresponding mature miRNA. Acts probably as a transcriptional activator of its corresponding pri-miRNA. The chain is Peptide encoded by miPEP319a from Arabidopsis thaliana (Mouse-ear cress).